Here is a 574-residue protein sequence, read N- to C-terminus: Arginine--tRNA ligase (574 aa).

Positions Pro121–His131 match the 'HIGH' region motif.

It belongs to the class-I aminoacyl-tRNA synthetase family. Monomer.

Its subcellular location is the cytoplasm. It catalyses the reaction tRNA(Arg) + L-arginine + ATP = L-arginyl-tRNA(Arg) + AMP + diphosphate. In Buchnera aphidicola subsp. Acyrthosiphon pisum (strain Tuc7), this protein is Arginine--tRNA ligase.